The following is a 558-amino-acid chain: MKLFKSILLIAACHAAQASATIDINADPNLTGAAPLTGILNGQKSDTQNMSGFDNTPPPAPPVVMSRMFGAQLFNGTSADSGATVGFNPDYILNPGDSIQVRLWGAFTFDGALQVDPKGNIFLPNVGPVKIAGVSNSQLNALVTSKVKEVYQSNVNVYASLLQAQPVKVYVTGFVRNPGLYGGVTSDSLLNYLIKAGGVDPERGSYVDIVVKRGNRVRSNVNLYDFLLNGKLGLSQFADGDTIIVGPRQHTFSVQGDVFNSYDFEFRESSIPVTEALSWARPKPGATHITIMRKQGLQKRSEYYPISSAPGRMLQNGDTLIVSTDRYAGTIQVRVEGAHSGEHAMVLPYGSTMRAVLEKVRPNSMSQMNAVQLYRPSVAQRQKEMLNLSLQKLEEASLSAQSSTKEEASLRMQEAQLISRFVAKARTVVPKGEVILNESNIDSVLLEDGDVINIPEKTSLVMVHGEVLFPNAVSWQKGMTTEDYIEKCGGLTQKSGNARIIVIRQNGARVNAEDVDSLKPGDEIMVLPKYESKNIEVTRGISTILYQLAVGAKVILSL.

Residues 1–20 (MKLFKSILLIAACHAAQASA) form the signal peptide.

To E.coli K1 KpsD.

It is found in the periplasm. Functionally, involved in the translocation of the polysialic acid capsule across the outer membrane to the cell surface. May function as the periplasmic binding element of the PSA transport system, in which it transiently interacts with the membrane component of the transporter, binds polysaccharide and transports the polymer to a component in the outer membrane. The sequence is that of Polysialic acid transport protein KpsD (kpsD) from Escherichia coli.